The chain runs to 274 residues: Ribose-5-phosphate isomerase (274 aa).

The protein belongs to the ribose 5-phosphate isomerase family.

It is found in the cytoplasm. The catalysed reaction is aldehydo-D-ribose 5-phosphate = D-ribulose 5-phosphate. It functions in the pathway carbohydrate degradation; pentose phosphate pathway; D-ribose 5-phosphate from D-ribulose 5-phosphate (non-oxidative stage): step 1/1. This Schizosaccharomyces pombe (strain 972 / ATCC 24843) (Fission yeast) protein is Ribose-5-phosphate isomerase (rki1).